The primary structure comprises 310 residues: tRNA dimethylallyltransferase (310 aa).

An ATP-binding site is contributed by 14 to 21 (GPTASGKS). 16–21 (TASGKS) is a binding site for substrate. Interaction with substrate tRNA stretches follow at residues 39–42 (DSMQ) and 163–167 (QRIVR).

The protein belongs to the IPP transferase family. In terms of assembly, monomer. It depends on Mg(2+) as a cofactor.

The enzyme catalyses adenosine(37) in tRNA + dimethylallyl diphosphate = N(6)-dimethylallyladenosine(37) in tRNA + diphosphate. Its function is as follows. Catalyzes the transfer of a dimethylallyl group onto the adenine at position 37 in tRNAs that read codons beginning with uridine, leading to the formation of N6-(dimethylallyl)adenosine (i(6)A). The polypeptide is tRNA dimethylallyltransferase (Brucella abortus (strain S19)).